Here is a 247-residue protein sequence, read N- to C-terminus: MPGRSSTNSGSTRYISFSGVESALSSLKTFQSCISSGMDTVSSVALDLVETQTEVSSEYSMDKAMVEFAKMDRELNHYVKAVQSTINHVKEERPEKVPDLKLLVEKKFLALQDKNSDADFKENEKFVQFKQQLRELKKQYGIHADRENDGIEGMDEDMIVTQSQTNFICPITQLEMKKPVKNKMCGHTYEEEAIVRMIESKHKRKKKACCPKIGCSHTDMRMSDLIPDEALRRAIESHNKKKKRHSE.

M1 is modified (N-acetylmethionine). Residues K90 and K107 each participate in a glycyl lysine isopeptide (Lys-Gly) (interchain with G-Cter in SUMO2) cross-link. S116 bears the Phosphoserine mark. Glycyl lysine isopeptide (Lys-Gly) (interchain with G-Cter in SUMO2) cross-links involve residues K125 and K130. The segment at M154–K240 adopts an SP-RING-type zinc-finger fold. Zn(2+) contacts are provided by C185, H187, C210, and C215.

The protein belongs to the NSE2 family. As to quaternary structure, component of the SMC5-SMC6 complex which consists at least of SMC5, SMC6, NSMCE2, NSMCE1, NSMCE4A or EID3 and NSMCE3. In terms of processing, sumoylated, possibly via autosumoylation.

Its subcellular location is the nucleus. The protein resides in the chromosome. It is found in the telomere. It localises to the PML body. It participates in protein modification; protein sumoylation. Functionally, E3 SUMO-protein ligase component of the SMC5-SMC6 complex, a complex involved in DNA double-strand break repair by homologous recombination. Is not be required for the stability of the complex. The complex may promote sister chromatid homologous recombination by recruiting the SMC1-SMC3 cohesin complex to double-strand breaks. Acts as an E3 ligase mediating SUMO attachment to various proteins such as SMC6L1 and TSNAX, the shelterin complex subunits TERF1, TERF2, TINF2 and TERF2IP, RAD51AP1, and maybe the cohesin components RAD21 and STAG2. Required for recruitment of telomeres to PML nuclear bodies. Required for sister chromatid cohesion during prometaphase and mitotic progression. This Rattus norvegicus (Rat) protein is E3 SUMO-protein ligase NSE2 (Nsmce2).